Here is a 314-residue protein sequence, read N- to C-terminus: Ribosomal RNA small subunit methyltransferase H (314 aa).

S-adenosyl-L-methionine-binding positions include 34 to 36 (GGH), Asp-54, Phe-83, Asp-104, and Gln-111.

This sequence belongs to the methyltransferase superfamily. RsmH family.

It is found in the cytoplasm. It catalyses the reaction cytidine(1402) in 16S rRNA + S-adenosyl-L-methionine = N(4)-methylcytidine(1402) in 16S rRNA + S-adenosyl-L-homocysteine + H(+). Specifically methylates the N4 position of cytidine in position 1402 (C1402) of 16S rRNA. This Ligilactobacillus salivarius (strain UCC118) (Lactobacillus salivarius) protein is Ribosomal RNA small subunit methyltransferase H.